The following is a 201-amino-acid chain: MKAIILAGGESSRFGKAKAFAKIDNQYFYQKIIETLKSTNMFNRIIISTNSQLASQFEYEYVIIDDEHHQNKGPLTGIYSVMKQYMDEELFFIVSVDTPMITSKAVNGLYHFMVSNLIESRLDIVAFKEGEICIPTIGFYTLSTFPFIEKALNSNHLSLKHVFKQLSTDWLDVTEIDSPYYWYKNINFQHDLDSLKMQINE.

GTP is bound by residues 6–8 (LAG), Lys-18, Asp-65, and Asp-97. Asp-97 is a Mg(2+) binding site.

Belongs to the MobA family. Mg(2+) serves as cofactor.

It is found in the cytoplasm. The enzyme catalyses Mo-molybdopterin + GTP + H(+) = Mo-molybdopterin guanine dinucleotide + diphosphate. Transfers a GMP moiety from GTP to Mo-molybdopterin (Mo-MPT) cofactor (Moco or molybdenum cofactor) to form Mo-molybdopterin guanine dinucleotide (Mo-MGD) cofactor. This Staphylococcus epidermidis (strain ATCC 35984 / DSM 28319 / BCRC 17069 / CCUG 31568 / BM 3577 / RP62A) protein is Probable molybdenum cofactor guanylyltransferase.